The primary structure comprises 158 residues: Eukaryotic translation initiation factor 5A-1 (158 aa).

Residues 1-10 (MSDEEHHFES) show a composition bias toward basic and acidic residues. The disordered stretch occupies residues 1–21 (MSDEEHHFESSDAGASKTYPQ). Ser2 carries the post-translational modification Phosphoserine. The residue at position 51 (Lys51) is a Hypusine.

Belongs to the eIF-5A family. Lys-51 undergoes hypusination, a unique post-translational modification that consists in the addition of a butylamino group from spermidine to lysine side chain, leading to the formation of the unusual amino acid hypusine. eIF-5As are the only known proteins to undergo this modification, which is essential for their function. In terms of tissue distribution, expressed in leaf vasculature and inflorescence stems. Present in xylem tissue but not in phloem, and in developing vessel members, but not in mature vessels members. Detected in anthers.

Functionally, translation factor that promotes translation elongation and termination, particularly upon ribosome stalling at specific amino acid sequence contexts. Binds between the exit (E) and peptidyl (P) site of the ribosome and promotes rescue of stalled ribosome: specifically required for efficient translation of polyproline-containing peptides as well as other motifs that stall the ribosome. Acts as a ribosome quality control (RQC) cofactor by joining the RQC complex to facilitate peptidyl transfer during CAT tailing step. Involved in xylogenesis. This Arabidopsis thaliana (Mouse-ear cress) protein is Eukaryotic translation initiation factor 5A-1 (ELF5A-1).